The sequence spans 88 residues: Small ribosomal subunit protein bS20 (88 aa).

Disordered regions lie at residues 1–23 (MANTTSAKKATRKIARRSAVNKA) and 65–88 (GVMHSNTASRKVSRLAQRVKSLSA).

It belongs to the bacterial ribosomal protein bS20 family.

Binds directly to 16S ribosomal RNA. This Rhizobium meliloti (strain 1021) (Ensifer meliloti) protein is Small ribosomal subunit protein bS20.